The chain runs to 434 residues: ATP-sensitive inward rectifier potassium channel 14 (434 aa).

Topologically, residues 1–81 (MGLARALRRL…LSDLFTTCVD (81 aa)) are cytoplasmic. Residue Cys-79 is modified to S-nitrosocysteine. The helical transmembrane segment at 82–108 (VRWRWMCLLFSCSFLASWLLFGLTFWL) threads the bilayer. The Extracellular segment spans residues 109-131 (IASLHGDLAAPPPPAPCFSQVAS). The helical; Pore-forming intramembrane region spans 132–148 (FLAAFLFALETQTSIGY). The Selectivity filter signature appears at 145 to 150 (SIGYGV). The Extracellular portion of the chain corresponds to 149-157 (GVRSVTEEC). The chain crosses the membrane as a helical span at residues 158–185 (PAAVAAVVLQCIAGCVLDAFVVGAVMAK). Over 186–434 (MAKPKKRNET…TPTLALTLPP (249 aa)) the chain is Cytoplasmic. Residues 398-434 (QEEDEEEDTKEGTSAETPDRAASPQALTPTLALTLPP) are disordered. Basic and acidic residues predominate over residues 407 to 416 (KEGTSAETPD). A compositionally biased stretch (low complexity) spans 418-434 (AASPQALTPTLALTLPP).

This sequence belongs to the inward rectifier-type potassium channel (TC 1.A.2.1) family. KCNJ14 subfamily. As to expression, expressed predominantly in motoneurons of cranial nerve motor nuclei within the general somatic and special visceral motor cell column.

It localises to the membrane. It carries out the reaction K(+)(in) = K(+)(out). Its activity is regulated as follows. Channel activity is regulated by variations of cytosolic pH; channels are activated by alkaline and inhibited by acidic pH values. Inhibited by Ba(2+) and Cs(+) in a voltage-dependent manner; sensitivity to those inhibitors is lower than in other Kir channels. Inward rectifier potassium channels are characterized by a greater tendency to allow potassium to flow into the cell rather than out of it. Their voltage dependence is regulated by the concentration of extracellular potassium; as external potassium is raised, the voltage range of the channel opening shifts to more positive voltages. The chain is ATP-sensitive inward rectifier potassium channel 14 (Kcnj14) from Rattus norvegicus (Rat).